The chain runs to 317 residues: Melanocyte-stimulating hormone receptor (317 aa).

The disordered stretch occupies residues 1 to 26 (MPVQGSPRSLLGAVNSTPTATPHLRP). The Extracellular portion of the chain corresponds to 1–37 (MPVQGSPRSLLGAVNSTPTATPHLRPAANQTGPQCLE). N-linked (GlcNAc...) asparagine glycosylation occurs at Asn29. A helical membrane pass occupies residues 38–63 (VSIPDGLFLCLGLVSLVENTLVVAAI). At 64 to 72 (AKNRNLHSP) the chain is on the cytoplasmic side. Residues 73–93 (MYCFVCCLALSDLLVSVSSVL) form a helical membrane-spanning segment. At 94–118 (ETAVLLLLGAGALAAQATVVQLLGN) the chain is on the extracellular side. A helical membrane pass occupies residues 119–140 (VIDVLLCSSMVSSLFFLGAIAM). Residues 141–163 (DRYISIFYALRYHSIVTLARARR) lie on the Cytoplasmic side of the membrane. The helical transmembrane segment at 164-183 (AIAAIWAASMLSSTLFIAYC) threads the bilayer. Residues 184–191 (DHTAALLC) are Extracellular-facing. A helical membrane pass occupies residues 192–211 (LVVFFLAMLVLMAVLYVHML). The Cytoplasmic segment spans residues 212–240 (TQACQHAQGIARLHKRQRPVQQGWGLKGA). The helical transmembrane segment at 241–266 (ATLAILLGVFFLCWGPFFLHLTLIAV) threads the bilayer. Over 267-279 (CPQHPTCSCIFKN) the chain is Extracellular. Residues 280–300 (FRLFLALIVCNAIVDPLIYAF) form a helical membrane-spanning segment. Residues 301-317 (RSQELCKTLKELLLFSW) lie on the Cytoplasmic side of the membrane.

Belongs to the G-protein coupled receptor 1 family. Interacts with MGRN1, but does not undergo MGRN1-mediated ubiquitination; this interaction competes with GNAS-binding and thus inhibits agonist-induced cAMP production. Interacts with OPN3; the interaction results in a decrease in MC1R-mediated cAMP signaling and ultimately a decrease in melanin production in melanocytes.

Its subcellular location is the cell membrane. Functionally, receptor for MSH (alpha, beta and gamma) and ACTH. The activity of this receptor is mediated by G proteins which activate adenylate cyclase. Mediates melanogenesis, the production of eumelanin (black/brown) and phaeomelanin (red/yellow), via regulation of cAMP signaling in melanocytes. This is Melanocyte-stimulating hormone receptor (MC1R) from Hapalemur griseus (Gray gentle lemur).